The chain runs to 102 residues: Integration host factor subunit beta (102 aa).

Belongs to the bacterial histone-like protein family. In terms of assembly, heterodimer of an alpha and a beta chain.

Functionally, this protein is one of the two subunits of integration host factor, a specific DNA-binding protein that functions in genetic recombination as well as in transcriptional and translational control. This Rhizobium rhizogenes (strain K84 / ATCC BAA-868) (Agrobacterium radiobacter) protein is Integration host factor subunit beta.